The chain runs to 599 residues: Aspartate--tRNA(Asp/Asn) ligase (599 aa).

Glu174 contributes to the L-aspartate binding site. Residues 198–201 (QLFK) are aspartate. An L-aspartate-binding site is contributed by Arg220. ATP is bound by residues 220 to 222 (RDE) and Gln229. His457 serves as a coordination point for L-aspartate. Residue Glu491 coordinates ATP. Arg498 contributes to the L-aspartate binding site. 543 to 546 (GLDR) is a binding site for ATP.

The protein belongs to the class-II aminoacyl-tRNA synthetase family. Type 1 subfamily. As to quaternary structure, homodimer.

It is found in the cytoplasm. It carries out the reaction tRNA(Asx) + L-aspartate + ATP = L-aspartyl-tRNA(Asx) + AMP + diphosphate. In terms of biological role, aspartyl-tRNA synthetase with relaxed tRNA specificity since it is able to aspartylate not only its cognate tRNA(Asp) but also tRNA(Asn). Reaction proceeds in two steps: L-aspartate is first activated by ATP to form Asp-AMP and then transferred to the acceptor end of tRNA(Asp/Asn). The protein is Aspartate--tRNA(Asp/Asn) ligase of Paraburkholderia phytofirmans (strain DSM 17436 / LMG 22146 / PsJN) (Burkholderia phytofirmans).